A 264-amino-acid chain; its full sequence is Glutamate racemase (264 aa).

Substrate-binding positions include 10 to 11 and 42 to 43; these read DS and YG. The active-site Proton donor/acceptor is Cys-73. 74–75 contacts substrate; it reads NT. Catalysis depends on Cys-181, which acts as the Proton donor/acceptor. 182–183 serves as a coordination point for substrate; it reads TH.

This sequence belongs to the aspartate/glutamate racemases family.

The catalysed reaction is L-glutamate = D-glutamate. Its pathway is cell wall biogenesis; peptidoglycan biosynthesis. Functionally, provides the (R)-glutamate required for cell wall biosynthesis. The polypeptide is Glutamate racemase (Thermoanaerobacter sp. (strain X514)).